The primary structure comprises 171 residues: Disulfide bond formation protein B (171 aa).

Residues 1-13 are Cytoplasmic-facing; the sequence is MTFISNLADTRLA. A helical transmembrane segment spans residues 14–30; the sequence is WGLLFLSALVLVAYALF. Over 31–48 the chain is Periplasmic; the sequence is SQHAMGLQPCIMCIYQRT. The cysteines at positions 40 and 43 are disulfide-linked. The helical transmembrane segment at 49 to 63 threads the bilayer; sequence AIFGIMFACVPVLAA. The Cytoplasmic portion of the chain corresponds to 64–70; the sequence is NNMLTRL. A helical membrane pass occupies residues 71 to 88; that stretch reads FAFTVWGISAIWGGLIAW. At 89 to 144 the chain is on the periplasmic side; it reads EHYDIQNAANPFFATCEIVPNFPSWLPLHEWLPNLFAATGDCGNIDWVFMDMSMPQ. Cysteine 104 and cysteine 130 form a disulfide bridge. Residues 145 to 163 form a helical membrane-spanning segment; the sequence is WMMVVFAIYSSIWFVVLAS. At 164 to 171 the chain is on the cytoplasmic side; sequence RLIGNRAI.

The protein belongs to the DsbB family.

The protein localises to the cell inner membrane. In terms of biological role, required for disulfide bond formation in some periplasmic proteins. Acts by oxidizing the DsbA protein. This is Disulfide bond formation protein B from Pseudoalteromonas atlantica (strain T6c / ATCC BAA-1087).